Here is a 284-residue protein sequence, read N- to C-terminus: 4-hydroxybenzoate octaprenyltransferase (284 aa).

A run of 9 helical transmembrane segments spans residues 19 to 39, 42 to 62, 85 to 105, 107 to 127, 134 to 154, 165 to 185, 211 to 231, 233 to 253, and 261 to 281; these read IPIL…SHGL, ISYL…GCII, GQLS…VAFI, VLFL…LAIL, FFAI…FMAF, AWIF…IYAL, ILLF…YCDF, SFFY…YFLY, and CINA…MAVI.

The protein belongs to the UbiA prenyltransferase family. Mg(2+) is required as a cofactor.

The protein localises to the cell inner membrane. It carries out the reaction all-trans-octaprenyl diphosphate + 4-hydroxybenzoate = 4-hydroxy-3-(all-trans-octaprenyl)benzoate + diphosphate. The protein operates within cofactor biosynthesis; ubiquinone biosynthesis. Catalyzes the prenylation of para-hydroxybenzoate (PHB) with an all-trans polyprenyl group. Mediates the second step in the final reaction sequence of ubiquinone-8 (UQ-8) biosynthesis, which is the condensation of the polyisoprenoid side chain with PHB, generating the first membrane-bound Q intermediate 3-octaprenyl-4-hydroxybenzoate. The polypeptide is 4-hydroxybenzoate octaprenyltransferase (Francisella tularensis subsp. novicida (strain U112)).